Consider the following 214-residue polypeptide: Putative ankyrin repeat protein RF_1081 (214 aa).

Over residues Met-1–Leu-14 the composition is skewed to polar residues. Residues Met-1–Thr-32 are disordered. The stretch at Asn-67–Asp-135 is one ANK repeat.

The sequence is that of Putative ankyrin repeat protein RF_1081 from Rickettsia felis (strain ATCC VR-1525 / URRWXCal2) (Rickettsia azadi).